The chain runs to 225 residues: 2-C-methyl-D-erythritol 4-phosphate cytidylyltransferase (225 aa).

It belongs to the IspD/TarI cytidylyltransferase family. IspD subfamily.

It catalyses the reaction 2-C-methyl-D-erythritol 4-phosphate + CTP + H(+) = 4-CDP-2-C-methyl-D-erythritol + diphosphate. It participates in isoprenoid biosynthesis; isopentenyl diphosphate biosynthesis via DXP pathway; isopentenyl diphosphate from 1-deoxy-D-xylulose 5-phosphate: step 2/6. In terms of biological role, catalyzes the formation of 4-diphosphocytidyl-2-C-methyl-D-erythritol from CTP and 2-C-methyl-D-erythritol 4-phosphate (MEP). The protein is 2-C-methyl-D-erythritol 4-phosphate cytidylyltransferase of Haemophilus influenzae (strain PittGG).